Here is a 400-residue protein sequence, read N- to C-terminus: Tryptophan synthase beta chain (400 aa).

Lys-90 carries the N6-(pyridoxal phosphate)lysine modification.

This sequence belongs to the TrpB family. In terms of assembly, tetramer of two alpha and two beta chains. Pyridoxal 5'-phosphate serves as cofactor.

The catalysed reaction is (1S,2R)-1-C-(indol-3-yl)glycerol 3-phosphate + L-serine = D-glyceraldehyde 3-phosphate + L-tryptophan + H2O. It participates in amino-acid biosynthesis; L-tryptophan biosynthesis; L-tryptophan from chorismate: step 5/5. The beta subunit is responsible for the synthesis of L-tryptophan from indole and L-serine. The sequence is that of Tryptophan synthase beta chain from Bacillus velezensis (strain DSM 23117 / BGSC 10A6 / LMG 26770 / FZB42) (Bacillus amyloliquefaciens subsp. plantarum).